The sequence spans 835 residues: Toll-like receptor 4 (835 aa).

The N-terminal stretch at 1 to 25 (MMPLLHLAGTLIMALFLSCLRPGSL) is a signal peptide. At 26 to 638 (NPCIEVLPNI…KTIISVSVVS (613 aa)) the chain is on the extracellular side. The cysteines at positions 28 and 39 are disulfide-linked. 3 N-linked (GlcNAc...) asparagine glycosylation sites follow: Asn34, Asn43, and Asn75. 5 LRR repeats span residues 54–75 (STKN…SFTN), 78–99 (QLQW…AWHG), 102–123 (QLST…SFSG), 126–147 (NLEN…HIGQ), and 150–171 (SLKK…EYFS). Asn172 carries N-linked (GlcNAc...) asparagine glycosylation. LRR repeat units follow at residues 175 to 198 (NLEH…QFLR), 204 to 224 (NLSL…AFQG), and 226 to 247 (RLHE…MCLQ). Asn204, Asn237, Asn248, Asn281, and Asn307 each carry an N-linked (GlcNAc...) asparagine glycan. Cysteines 280 and 304 form a disulfide. The stretch at 372–381 (SLRYLDLSRN) is one LRR 9 repeat. Cys388 and Cys389 are disulfide-bonded. LRR repeat units follow at residues 398 to 420 (NLKY…MGLE), 421 to 442 (ELEY…SVFL), 446 to 467 (KLLY…IFLG), and 470 to 491 (SLNT…NVFT). Residues Asn492, Asn495, and Asn524 are each glycosylated (N-linked (GlcNAc...) asparagine). LRR repeat units lie at residues 495-516 (NLTF…VFDT), 519-540 (RLQL…HYKQ), and 543-564 (SLRT…LQHF). Asn572 and Asn575 each carry an N-linked (GlcNAc...) asparagine glycan. An LRRCT domain is found at 576–627 (NSVACICEYQNFLQWVKDQKMFLVNVEQMKCASPIDMKASLVLDFTNSTCYI). Intrachain disulfides connect Cys580/Cys606 and Cys582/Cys625. An N-linked (GlcNAc...) asparagine glycan is attached at Asn622. The helical transmembrane segment at 639–659 (VLVVATVAFLIYHFYFHLILI) threads the bilayer. Residues 660-835 (AGCKKYSRGE…EEEQEATTLT (176 aa)) lie on the Cytoplasmic side of the membrane. The TIR domain maps to 670 to 813 (SIYDAFVIYS…IFWRRLKKAL (144 aa)).

This sequence belongs to the Toll-like receptor family. Belongs to the lipopolysaccharide (LPS) receptor, a multi-protein complex containing at least CD14, LY96 and TLR4. Binding to bacterial LPS leads to homodimerization. Interacts with LY96 via the extracellular domain. Interacts with MYD88 and TIRAP via their respective TIR domains. Interacts with TICAM2. Interacts with NOX4. Interacts with CNPY3 and HSP90B1; this interaction is required for proper folding in the endoplasmic reticulum. Interacts with MAP3K21; this interaction leads to negative regulation of TLR4 signaling. Interacts with CD36, following CD36 stimulation by oxLDL or amyloid-beta 42, and forms a heterodimer with TLR6. The trimeric complex is internalized and triggers inflammatory response. LYN kinase activity facilitates TLR4-TLR6 heterodimerization and signal initiation. Interacts with TICAM1 in response to LPS in a WDFY1-dependent manner. Interacts with WDFY1 in response to LPS. Interacts with SMPDL3B. Interacts with CEACAM1; upon lipopolysaccharide stimulation, forms a complex including TLR4 and the phosphorylated form of SYK and CEACAM1, which in turn, recruits PTPN6 that dephosphorylates SYK, reducing the production of reactive oxygen species (ROS) and lysosome disruption, which in turn, reduces the activity of the inflammasome. Interacts with RFTN1; the interaction occurs in response to lipopolysaccharide stimulation. Interacts with SCIMP; the interaction occurs in response to lipopolysaccharide stimulation and is enhanced by phosphorylation of SCIMP by LYN. This interaction facilitates the phosphorylation of TLR4 by LYN which elicits a selective cytokine response in macrophages. Interacts with TRAF3IP3. Interacts with TREM1; this interaction enhances TLR4-mediated inflammatory response. Interacts with ZG16B/PAUF. Interacts with CD82; this interaction inhibits TLR4-mediated signaling pathway. Post-translationally, phosphorylated on tyrosine residues by LYN after binding lipopolysaccharide. In terms of processing, ubiquitinated by RNF128 via 'Lys-28'-linked polyubiquitin chains, leading to proteasomal degradation.

Its subcellular location is the cell membrane. The protein resides in the early endosome. It is found in the cell projection. It localises to the ruffle. Transmembrane receptor that functions as a pattern recognition receptor recognizing pathogen- and damage-associated molecular patterns (PAMPs and DAMPs) to induce innate immune responses via downstream signaling pathways. At the plasma membrane, cooperates with LY96 to mediate the innate immune response to bacterial lipopolysaccharide (LPS). Also involved in LPS-independent inflammatory responses triggered by free fatty acids, such as palmitate, and Ni(2+). Mechanistically, acts via MYD88, TIRAP and TRAF6, leading to NF-kappa-B activation, cytokine secretion and the inflammatory response. Alternatively, CD14-mediated TLR4 internalization via endocytosis is associated with the initiation of a MYD88-independent signaling via the TICAM1-TBK1-IRF3 axis leading to type I interferon production. In addition to the secretion of proinflammatory cytokines, initiates the activation of NLRP3 inflammasome and formation of a positive feedback loop between autophagy and NF-kappa-B signaling cascade. In complex with TLR6, promotes inflammation in monocytes/macrophages by associating with TLR6 and the receptor CD86. Upon ligand binding, such as oxLDL or amyloid-beta 42, the TLR4:TLR6 complex is internalized and triggers inflammatory response, leading to NF-kappa-B-dependent production of CXCL1, CXCL2 and CCL9 cytokines, via MYD88 signaling pathway, and CCL5 cytokine, via TICAM1 signaling pathway. In myeloid dendritic cells, vesicular stomatitis virus glycoprotein G but not LPS promotes the activation of IRF7, leading to type I IFN production in a CD14-dependent manner. This chain is Toll-like receptor 4 (Tlr4), found in Rattus norvegicus (Rat).